Reading from the N-terminus, the 420-residue chain is Na(+)/H(+) antiporter NhaA (420 aa).

10 consecutive transmembrane segments (helical) span residues 34-54, 69-89, 107-127, 141-161, 168-190, 194-213, 271-291, 301-321, 342-362, and 374-394; these read TTGG…ANLG, LTIE…IAGL, LVPI…YTLF, IPMA…GAGL, FLLT…FFST, IWWL…MQHF, WSAG…HVSG, PISL…ITLG, IIAV…MTDL, and AKAS…AMLH.

This sequence belongs to the NhaA Na(+)/H(+) (TC 2.A.33) antiporter family.

Its subcellular location is the cell membrane. The catalysed reaction is Na(+)(in) + 2 H(+)(out) = Na(+)(out) + 2 H(+)(in). In terms of biological role, na(+)/H(+) antiporter that extrudes sodium in exchange for external protons. In Cutibacterium acnes (strain DSM 16379 / KPA171202) (Propionibacterium acnes), this protein is Na(+)/H(+) antiporter NhaA.